The sequence spans 413 residues: Phosphopentomutase (413 aa).

Residues Asp11, Asp306, His311, Asp347, His348, and His359 each contribute to the Mn(2+) site.

The protein belongs to the phosphopentomutase family. It depends on Mn(2+) as a cofactor.

It is found in the cytoplasm. The enzyme catalyses 2-deoxy-alpha-D-ribose 1-phosphate = 2-deoxy-D-ribose 5-phosphate. It carries out the reaction alpha-D-ribose 1-phosphate = D-ribose 5-phosphate. Its pathway is carbohydrate degradation; 2-deoxy-D-ribose 1-phosphate degradation; D-glyceraldehyde 3-phosphate and acetaldehyde from 2-deoxy-alpha-D-ribose 1-phosphate: step 1/2. Isomerase that catalyzes the conversion of deoxy-ribose 1-phosphate (dRib-1-P) and ribose 1-phosphate (Rib-1-P) to deoxy-ribose 5-phosphate (dRib-5-P) and ribose 5-phosphate (Rib-5-P), respectively. The polypeptide is Phosphopentomutase (Helicobacter pylori (strain Shi470)).